Reading from the N-terminus, the 382-residue chain is Galactokinase (382 aa).

Residue 34–37 (EHTD) coordinates substrate. 124–130 (GAGLSSS) serves as a coordination point for ATP. Residues serine 130 and glutamate 162 each contribute to the Mg(2+) site. Aspartate 174 functions as the Proton acceptor in the catalytic mechanism. Tyrosine 223 is a binding site for substrate.

Belongs to the GHMP kinase family. GalK subfamily.

The protein localises to the cytoplasm. The enzyme catalyses alpha-D-galactose + ATP = alpha-D-galactose 1-phosphate + ADP + H(+). Its pathway is carbohydrate metabolism; galactose metabolism. Its function is as follows. Catalyzes the transfer of the gamma-phosphate of ATP to D-galactose to form alpha-D-galactose-1-phosphate (Gal-1-P). This Salmonella schwarzengrund (strain CVM19633) protein is Galactokinase.